The sequence spans 89 residues: Small ribosomal subunit protein uS15 (89 aa).

It belongs to the universal ribosomal protein uS15 family. As to quaternary structure, part of the 30S ribosomal subunit. Forms a bridge to the 50S subunit in the 70S ribosome, contacting the 23S rRNA.

Functionally, one of the primary rRNA binding proteins, it binds directly to 16S rRNA where it helps nucleate assembly of the platform of the 30S subunit by binding and bridging several RNA helices of the 16S rRNA. Forms an intersubunit bridge (bridge B4) with the 23S rRNA of the 50S subunit in the ribosome. This Janthinobacterium sp. (strain Marseille) (Minibacterium massiliensis) protein is Small ribosomal subunit protein uS15.